The primary structure comprises 214 residues: Holliday junction branch migration complex subunit RuvA (214 aa).

Residues 1–63 are domain I; it reads MIASLSGTVE…EDALTLYGFA (63 aa). The domain II stretch occupies residues 64–142; sequence DRDEREVFEV…PTGEPVPGAE (79 aa). Residues 143–151 are flexible linker; that stretch reads AEASDEPAV. The segment at 151 to 214 is domain III; that stretch reads VETVWHADVV…GMAGAVRGGR (64 aa).

It belongs to the RuvA family. As to quaternary structure, homotetramer. Forms an RuvA(8)-RuvB(12)-Holliday junction (HJ) complex. HJ DNA is sandwiched between 2 RuvA tetramers; dsDNA enters through RuvA and exits via RuvB. An RuvB hexamer assembles on each DNA strand where it exits the tetramer. Each RuvB hexamer is contacted by two RuvA subunits (via domain III) on 2 adjacent RuvB subunits; this complex drives branch migration. In the full resolvosome a probable DNA-RuvA(4)-RuvB(12)-RuvC(2) complex forms which resolves the HJ.

It is found in the cytoplasm. Its function is as follows. The RuvA-RuvB-RuvC complex processes Holliday junction (HJ) DNA during genetic recombination and DNA repair, while the RuvA-RuvB complex plays an important role in the rescue of blocked DNA replication forks via replication fork reversal (RFR). RuvA specifically binds to HJ cruciform DNA, conferring on it an open structure. The RuvB hexamer acts as an ATP-dependent pump, pulling dsDNA into and through the RuvAB complex. HJ branch migration allows RuvC to scan DNA until it finds its consensus sequence, where it cleaves and resolves the cruciform DNA. This is Holliday junction branch migration complex subunit RuvA from Micrococcus luteus (strain ATCC 4698 / DSM 20030 / JCM 1464 / CCM 169 / CCUG 5858 / IAM 1056 / NBRC 3333 / NCIMB 9278 / NCTC 2665 / VKM Ac-2230) (Micrococcus lysodeikticus).